We begin with the raw amino-acid sequence, 106 residues long: Large ribosomal subunit protein uL24 (106 aa).

The protein belongs to the universal ribosomal protein uL24 family. As to quaternary structure, part of the 50S ribosomal subunit.

Its function is as follows. One of two assembly initiator proteins, it binds directly to the 5'-end of the 23S rRNA, where it nucleates assembly of the 50S subunit. One of the proteins that surrounds the polypeptide exit tunnel on the outside of the subunit. The polypeptide is Large ribosomal subunit protein uL24 (Blochmanniella pennsylvanica (strain BPEN)).